The primary structure comprises 401 residues: 1-deoxy-D-xylulose 5-phosphate reductoisomerase (401 aa).

NADPH is bound by residues threonine 11, glycine 12, serine 13, isoleucine 14, arginine 38, asparagine 39, and asparagine 125. Lysine 126 contributes to the 1-deoxy-D-xylulose 5-phosphate binding site. Glutamate 127 is an NADPH binding site. Aspartate 151 is a Mn(2+) binding site. 4 residues coordinate 1-deoxy-D-xylulose 5-phosphate: serine 152, glutamate 153, serine 179, and histidine 202. Residue glutamate 153 coordinates Mn(2+). Glycine 208 is a binding site for NADPH. The 1-deoxy-D-xylulose 5-phosphate site is built by serine 215, asparagine 220, lysine 221, and glutamate 224. Glutamate 224 lines the Mn(2+) pocket.

The protein belongs to the DXR family. It depends on Mg(2+) as a cofactor. Mn(2+) serves as cofactor.

It catalyses the reaction 2-C-methyl-D-erythritol 4-phosphate + NADP(+) = 1-deoxy-D-xylulose 5-phosphate + NADPH + H(+). It participates in isoprenoid biosynthesis; isopentenyl diphosphate biosynthesis via DXP pathway; isopentenyl diphosphate from 1-deoxy-D-xylulose 5-phosphate: step 1/6. Functionally, catalyzes the NADPH-dependent rearrangement and reduction of 1-deoxy-D-xylulose-5-phosphate (DXP) to 2-C-methyl-D-erythritol 4-phosphate (MEP). In Paraburkholderia xenovorans (strain LB400), this protein is 1-deoxy-D-xylulose 5-phosphate reductoisomerase.